Here is a 421-residue protein sequence, read N- to C-terminus: UDP-N-acetylglucosamine 1-carboxyvinyltransferase (421 aa).

Residue 22–23 participates in phosphoenolpyruvate binding; that stretch reads KN. R93 lines the UDP-N-acetyl-alpha-D-glucosamine pocket. The active-site Proton donor is C117. The residue at position 117 (C117) is a 2-(S-cysteinyl)pyruvic acid O-phosphothioketal. UDP-N-acetyl-alpha-D-glucosamine-binding positions include 122 to 126, D309, and I331; that span reads RPVDQ.

This sequence belongs to the EPSP synthase family. MurA subfamily.

It is found in the cytoplasm. The enzyme catalyses phosphoenolpyruvate + UDP-N-acetyl-alpha-D-glucosamine = UDP-N-acetyl-3-O-(1-carboxyvinyl)-alpha-D-glucosamine + phosphate. It functions in the pathway cell wall biogenesis; peptidoglycan biosynthesis. Its function is as follows. Cell wall formation. Adds enolpyruvyl to UDP-N-acetylglucosamine. This chain is UDP-N-acetylglucosamine 1-carboxyvinyltransferase, found in Albidiferax ferrireducens (strain ATCC BAA-621 / DSM 15236 / T118) (Rhodoferax ferrireducens).